The following is a 143-amino-acid chain: Nucleoside diphosphate kinase (143 aa).

Residues lysine 11, phenylalanine 59, arginine 87, threonine 93, arginine 104, and asparagine 114 each coordinate ATP. Histidine 117 (pros-phosphohistidine intermediate) is an active-site residue.

It belongs to the NDK family. In terms of assembly, homotetramer. Mg(2+) is required as a cofactor.

It is found in the cytoplasm. The catalysed reaction is a 2'-deoxyribonucleoside 5'-diphosphate + ATP = a 2'-deoxyribonucleoside 5'-triphosphate + ADP. The enzyme catalyses a ribonucleoside 5'-diphosphate + ATP = a ribonucleoside 5'-triphosphate + ADP. In terms of biological role, major role in the synthesis of nucleoside triphosphates other than ATP. The ATP gamma phosphate is transferred to the NDP beta phosphate via a ping-pong mechanism, using a phosphorylated active-site intermediate. The protein is Nucleoside diphosphate kinase of Shewanella halifaxensis (strain HAW-EB4).